The chain runs to 91 residues: Small ribosomal subunit protein uS19 (91 aa).

It belongs to the universal ribosomal protein uS19 family.

Functionally, protein S19 forms a complex with S13 that binds strongly to the 16S ribosomal RNA. In Synechococcus sp. (strain RCC307), this protein is Small ribosomal subunit protein uS19.